The following is a 313-amino-acid chain: 4-diphosphocytidyl-2-C-methyl-D-erythritol kinase (313 aa).

Lysine 11 is a catalytic residue. 99-109 lines the ATP pocket; sequence PVAAGLAGGST. Residue aspartate 141 is part of the active site.

The protein belongs to the GHMP kinase family. IspE subfamily.

The enzyme catalyses 4-CDP-2-C-methyl-D-erythritol + ATP = 4-CDP-2-C-methyl-D-erythritol 2-phosphate + ADP + H(+). It participates in isoprenoid biosynthesis; isopentenyl diphosphate biosynthesis via DXP pathway; isopentenyl diphosphate from 1-deoxy-D-xylulose 5-phosphate: step 3/6. In terms of biological role, catalyzes the phosphorylation of the position 2 hydroxy group of 4-diphosphocytidyl-2C-methyl-D-erythritol. This Microcystis aeruginosa (strain NIES-843 / IAM M-2473) protein is 4-diphosphocytidyl-2-C-methyl-D-erythritol kinase.